Here is a 241-residue protein sequence, read N- to C-terminus: Gamma-interferon-inducible lysosomal thiol reductase-like protein (241 aa).

The N-terminal stretch at 1-18 is a signal peptide; sequence MLFKSLLLLSVYAVTCYG. N105 and N152 each carry an N-linked (GlcNAc...) asparagine glycan. The helical transmembrane segment at 218–235 threads the bilayer; the sequence is STGSAISSLGMIVTVVAV.

This sequence belongs to the GILT family. Salivary gland (at protein level). Low-level expression in midgut (at protein level). Expressed in head and leg tissues. Ovary. Fat body. In terms of tissue distribution, (Microbial infection) Detected with Plasmodium berghei sporozoites isolated from the saliva of infected Anopheles gambiae mosquitoes (at protein level).

It localises to the membrane. Its function is as follows. Required for normal development of ovary and testis. In terms of biological role, (Microbial infection) Interacts with the surface of Plasmodium berghei sporozoites. Reduces P.berghei sporozoite cell traversal activity and transmission. Limits the motility of P.berghei sporozoites. Decreases the levels of host liver infection by P.berghei sporozoites. Does not affect P.berghei sporozoite viability. Indirectly promotes P.berghei survival in mosquitoes by influencing ovarian development and the subsequent production of 20-hydroxyecdysone and vitellogenin, which, in turn, modulates TEP1-dependent parasite killing. Promotes P.berghei infection in mosquitoes, most likely impacting the oocyst stage of parasite development. (Microbial infection) Promotes Plasmodium falciparum survival in mosquitoes. This is Gamma-interferon-inducible lysosomal thiol reductase-like protein from Anopheles gambiae (African malaria mosquito).